Reading from the N-terminus, the 390-residue chain is Alpha-2B adrenergic receptor (390 aa).

A helical transmembrane segment spans residues 1-25; sequence AIATVITFLILFTIFGNSLVILAVL. Over 26–36 the chain is Cytoplasmic; sequence TSRSLRAPQNL. The chain crosses the membrane as a helical span at residues 37–62; that stretch reads FLVSLAAADIMVATLIIPFSLANELL. The Extracellular segment spans residues 63–72; sequence GYWYFRRTWC. Cysteines 72 and 151 form a disulfide. The chain crosses the membrane as a helical span at residues 73 to 95; that stretch reads EVYLALDVLFCTSSIVHLCAISL. Residues 96–117 are Cytoplasmic-facing; that stretch reads DRYWAVSRALEYNSKRTPRRIK. A helical transmembrane segment spans residues 118-140; sequence CIILTVWLIAAAISLPPLIYKGD. Over 141–156 the chain is Extracellular; that stretch reads QGPQPRGRPQCKLNQE. The helical transmembrane segment at 157–180 threads the bilayer; sequence AWYILSSSIGSFFAPCLIMILVYL. Residues 181–354 lie on the Cytoplasmic side of the membrane; that stretch reads RIYLIAKRSH…LTREKRFTFV (174 aa). 2 disordered regions span residues 191–218 and 233–311; these read RRGPGAKGGPRKGESKQPHSLDSGPSAL and EANG…PLQQ. Residues 280–292 are compositionally biased toward acidic residues; the sequence is LEEEADKEEEEEC. Residues 355 to 378 form a helical membrane-spanning segment; sequence LAVVIGVFVLCWFPFFFSYSLGAI. The Extracellular portion of the chain corresponds to 379-390; it reads CPQHCKVPHGLF.

Belongs to the G-protein coupled receptor 1 family. Adrenergic receptor subfamily. ADRA2B sub-subfamily. As to quaternary structure, interacts with RAB26. Interacts with PPP1R9B. Interacts with GGA1, GGA2 and GGA3.

Its subcellular location is the cell membrane. In terms of biological role, alpha-2 adrenergic receptors mediate the catecholamine-induced inhibition of adenylate cyclase through the action of G proteins. The chain is Alpha-2B adrenergic receptor (ADRA2B) from Dugong dugon (Dugong).